Here is a 236-residue protein sequence, read N- to C-terminus: Ubiquinone biosynthesis O-methyltransferase (236 aa).

The S-adenosyl-L-methionine site is built by R39, G59, D80, and M124.

This sequence belongs to the methyltransferase superfamily. UbiG/COQ3 family.

The catalysed reaction is a 3-demethylubiquinol + S-adenosyl-L-methionine = a ubiquinol + S-adenosyl-L-homocysteine + H(+). It carries out the reaction a 3-(all-trans-polyprenyl)benzene-1,2-diol + S-adenosyl-L-methionine = a 2-methoxy-6-(all-trans-polyprenyl)phenol + S-adenosyl-L-homocysteine + H(+). The protein operates within cofactor biosynthesis; ubiquinone biosynthesis. Functionally, O-methyltransferase that catalyzes the 2 O-methylation steps in the ubiquinone biosynthetic pathway. This is Ubiquinone biosynthesis O-methyltransferase from Pseudoalteromonas translucida (strain TAC 125).